A 159-amino-acid chain; its full sequence is Transcription elongation factor GreA (159 aa).

Residues 3–37 adopt a coiled-coil conformation; that stretch reads TNKEVVLTYEGLQKLEQELENLKTVKRREVAERIK.

The protein belongs to the GreA/GreB family.

Necessary for efficient RNA polymerase transcription elongation past template-encoded arresting sites. The arresting sites in DNA have the property of trapping a certain fraction of elongating RNA polymerases that pass through, resulting in locked ternary complexes. Cleavage of the nascent transcript by cleavage factors such as GreA or GreB allows the resumption of elongation from the new 3'terminus. GreA releases sequences of 2 to 3 nucleotides. The protein is Transcription elongation factor GreA of Acetivibrio thermocellus (strain ATCC 27405 / DSM 1237 / JCM 9322 / NBRC 103400 / NCIMB 10682 / NRRL B-4536 / VPI 7372) (Clostridium thermocellum).